A 354-amino-acid chain; its full sequence is Ornithine transcarbamylase, mitochondrial (354 aa).

A mitochondrion-targeting transit peptide spans 1–32 (MLFNLRILLNNAAFRNGHNFMVRNFRCGQPLQ). Position 70 is an N6-acetyllysine; alternate (Lys-70). At Lys-70 the chain carries N6-succinyllysine; alternate. Lys-80 bears the N6-succinyllysine mark. An N6-acetyllysine; alternate modification is found at Lys-88. N6-succinyllysine; alternate is present on Lys-88. 90–93 (STRT) serves as a coordination point for carbamoyl phosphate. Ser-133 is modified (phosphoserine). Residue Arg-141 participates in carbamoyl phosphate binding. Position 144 is an N6-acetyllysine; alternate (Lys-144). Lys-144 carries the post-translational modification N6-succinyllysine; alternate. The carbamoyl phosphate site is built by His-168 and Gln-171. Asn-199 is an L-ornithine binding site. N6-acetyllysine; alternate is present on residues Lys-221, Lys-231, and Lys-238. Residues Lys-221, Lys-231, and Lys-238 each carry the N6-succinyllysine; alternate modification. Lys-243 carries the N6-acetyllysine modification. L-ornithine-binding residues include Asp-263, Ser-267, and Met-268. Residues Lys-274 and Lys-289 each carry the N6-succinyllysine modification. An N6-acetyllysine; alternate modification is found at Lys-292. Lys-292 is subject to N6-succinyllysine; alternate. Cys-303 acts as the Proton acceptor in catalysis. 303-304 (CL) serves as a coordination point for carbamoyl phosphate. N6-acetyllysine; alternate is present on Lys-307. An N6-succinyllysine; alternate modification is found at Lys-307. Arg-330 contributes to the carbamoyl phosphate binding site.

It belongs to the aspartate/ornithine carbamoyltransferase superfamily. OTCase family. In terms of assembly, homotrimer. Acetylation at Lys-88 negatively regulates ornithine carbamoyltransferase activity in response to nutrient signals. As to expression, mainly expressed in liver and intestinal mucosa.

The protein localises to the mitochondrion matrix. It carries out the reaction carbamoyl phosphate + L-ornithine = L-citrulline + phosphate + H(+). The protein operates within nitrogen metabolism; urea cycle; L-citrulline from L-ornithine and carbamoyl phosphate: step 1/1. Negatively regulated by lysine acetylation. Functionally, catalyzes the second step of the urea cycle, the condensation of carbamoyl phosphate with L-ornithine to form L-citrulline. The urea cycle ensures the detoxification of ammonia by converting it to urea for excretion. This Homo sapiens (Human) protein is Ornithine transcarbamylase, mitochondrial.